A 186-amino-acid polypeptide reads, in one-letter code: Ribosome-recycling factor (186 aa).

Belongs to the RRF family.

It localises to the cytoplasm. Its function is as follows. Responsible for the release of ribosomes from messenger RNA at the termination of protein biosynthesis. May increase the efficiency of translation by recycling ribosomes from one round of translation to another. This Azorhizobium caulinodans (strain ATCC 43989 / DSM 5975 / JCM 20966 / LMG 6465 / NBRC 14845 / NCIMB 13405 / ORS 571) protein is Ribosome-recycling factor.